We begin with the raw amino-acid sequence, 213 residues long: Adenylate kinase (213 aa).

10-15 (GAGKGT) is an ATP binding site. The NMP stretch occupies residues 30–59 (STGDMLRAALKEGTPLGLEAKKYMDQGALV). AMP-binding positions include Thr31, Arg36, 57 to 59 (ALV), 85 to 88 (GFPR), and Gln92. The segment at 126 to 163 (GRRTCRSCGAGFHVMFDPPKTDGKCDKCGGELYQRDDD) is LID. Arg127 is a binding site for ATP. Residues Cys130, Cys133, Cys150, and Cys153 each coordinate Zn(2+). Residues Arg160 and Arg171 each coordinate AMP. ATP is bound at residue Gly199.

The protein belongs to the adenylate kinase family. Monomer.

It localises to the cytoplasm. The catalysed reaction is AMP + ATP = 2 ADP. It participates in purine metabolism; AMP biosynthesis via salvage pathway; AMP from ADP: step 1/1. In terms of biological role, catalyzes the reversible transfer of the terminal phosphate group between ATP and AMP. Plays an important role in cellular energy homeostasis and in adenine nucleotide metabolism. The protein is Adenylate kinase of Syntrophobacter fumaroxidans (strain DSM 10017 / MPOB).